A 293-amino-acid polypeptide reads, in one-letter code: 4-hydroxy-tetrahydrodipicolinate synthase (293 aa).

Thr44 contributes to the pyruvate binding site. Tyr132 acts as the Proton donor/acceptor in catalysis. Catalysis depends on Lys160, which acts as the Schiff-base intermediate with substrate. Ile204 contributes to the pyruvate binding site.

The protein belongs to the DapA family. Homotetramer; dimer of dimers.

The protein localises to the cytoplasm. It catalyses the reaction L-aspartate 4-semialdehyde + pyruvate = (2S,4S)-4-hydroxy-2,3,4,5-tetrahydrodipicolinate + H2O + H(+). It participates in amino-acid biosynthesis; L-lysine biosynthesis via DAP pathway; (S)-tetrahydrodipicolinate from L-aspartate: step 3/4. Functionally, catalyzes the condensation of (S)-aspartate-beta-semialdehyde [(S)-ASA] and pyruvate to 4-hydroxy-tetrahydrodipicolinate (HTPA). This chain is 4-hydroxy-tetrahydrodipicolinate synthase, found in Hyphomonas neptunium (strain ATCC 15444).